The primary structure comprises 146 residues: Hemoglobin subunit beta (146 aa).

Val-1 carries the post-translational modification N-acetylvaline. The Globin domain maps to 2 to 146 (HLTPDEKNAV…VANALAHKYH (145 aa)). Thr-12 is subject to Phosphothreonine. Residue Ser-44 is modified to Phosphoserine. At Lys-59 the chain carries N6-acetyllysine. His-63 provides a ligand contact to heme b. The residue at position 82 (Lys-82) is an N6-acetyllysine. Heme b is bound at residue His-92. Cys-93 carries the post-translational modification S-nitrosocysteine. Lys-144 is modified (N6-acetyllysine).

This sequence belongs to the globin family. Heterotetramer of two alpha chains and two beta chains. As to expression, red blood cells.

Involved in oxygen transport from the lung to the various peripheral tissues. In Piliocolobus badius (Western red colobus), this protein is Hemoglobin subunit beta (HBB).